The chain runs to 151 residues: uncharacterized protein (151 aa).

The next 4 helical transmembrane spans lie at 22–42 (IVSITFIAAIALAVIFGGFFF), 62–82 (ALFILACFAVGLIIDPLTKII), 97–117 (LFAFILYFISNLITICFADYF), and 121–141 (IYIPDVLLVVISAFMAIIELA).

The protein localises to the cell membrane. This is an uncharacterized protein from Bacillus subtilis (strain 168).